We begin with the raw amino-acid sequence, 475 residues long: Beta-amyrin 16-alpha-hydroxylase CYP87D16 (475 aa).

The chain crosses the membrane as a helical span at residues 3–23; sequence VVGLIGVAVVTILITQYVYKW. Cysteine 423 is a binding site for heme.

The protein belongs to the cytochrome P450 family. The cofactor is heme.

Its subcellular location is the membrane. It carries out the reaction beta-amyrin + reduced [NADPH--hemoprotein reductase] + O2 = 16alpha-hydroxy-beta-amyrin + oxidized [NADPH--hemoprotein reductase] + H2O + H(+). Involved in the biosynthetic pathway of maesasaponins, which are oleanane-type saponins with diverse biological activities. Catalyzes the C-16alpha oxidation of beta-amyrin to form 16alpha-hydroxy-beta-amyrin. The polypeptide is Beta-amyrin 16-alpha-hydroxylase CYP87D16 (Maesa lanceolata (False assegai)).